The primary structure comprises 701 residues: DNA ligase 2 (701 aa).

Polar residues predominate over residues 1–10; the sequence is MSPAPQNRQP. A disordered region spans residues 1–21; that stretch reads MSPAPQNRQPSGVPVGGQFAA. NAD(+) is bound by residues 64–68, 111–112, and Glu-133; these read DAEFD and SL. Lys-135 (N6-AMP-lysine intermediate) is an active-site residue. Positions 156, 189, 302, and 326 each coordinate NAD(+). Residues Cys-420, Cys-423, Cys-436, and Cys-441 each contribute to the Zn(2+) site. The span at 603 to 613 shows a compositional bias: low complexity; the sequence is KAAPAAGAKAP. The segment at 603 to 623 is disordered; it reads KAAPAAGAKAPKLTKPDGKPM. The region spanning 615–701 is the BRCT domain; the sequence is LTKPDGKPMN…FAQMVEDGEV (87 aa).

Belongs to the NAD-dependent DNA ligase family. LigA subfamily. Mg(2+) is required as a cofactor. Requires Mn(2+) as cofactor.

The enzyme catalyses NAD(+) + (deoxyribonucleotide)n-3'-hydroxyl + 5'-phospho-(deoxyribonucleotide)m = (deoxyribonucleotide)n+m + AMP + beta-nicotinamide D-nucleotide.. In terms of biological role, DNA ligase that catalyzes the formation of phosphodiester linkages between 5'-phosphoryl and 3'-hydroxyl groups in double-stranded DNA using NAD as a coenzyme and as the energy source for the reaction. It is essential for DNA replication and repair of damaged DNA. This is DNA ligase 2 from Pseudarthrobacter chlorophenolicus (strain ATCC 700700 / DSM 12829 / CIP 107037 / JCM 12360 / KCTC 9906 / NCIMB 13794 / A6) (Arthrobacter chlorophenolicus).